A 158-amino-acid polypeptide reads, in one-letter code: Small ribosomal subunit protein uS7 (158 aa).

This sequence belongs to the universal ribosomal protein uS7 family. In terms of assembly, part of the 30S ribosomal subunit. Contacts proteins S9 and S11.

In terms of biological role, one of the primary rRNA binding proteins, it binds directly to 16S rRNA where it nucleates assembly of the head domain of the 30S subunit. Is located at the subunit interface close to the decoding center, probably blocks exit of the E-site tRNA. The polypeptide is Small ribosomal subunit protein uS7 (Porphyromonas gingivalis (strain ATCC 33277 / DSM 20709 / CIP 103683 / JCM 12257 / NCTC 11834 / 2561)).